A 541-amino-acid polypeptide reads, in one-letter code: 2-succinyl-5-enolpyruvyl-6-hydroxy-3-cyclohexene-1-carboxylate synthase (541 aa).

This sequence belongs to the TPP enzyme family. MenD subfamily. In terms of assembly, homodimer. Mg(2+) is required as a cofactor. Requires Mn(2+) as cofactor. Thiamine diphosphate serves as cofactor.

It carries out the reaction isochorismate + 2-oxoglutarate + H(+) = 5-enolpyruvoyl-6-hydroxy-2-succinyl-cyclohex-3-ene-1-carboxylate + CO2. Its pathway is quinol/quinone metabolism; 1,4-dihydroxy-2-naphthoate biosynthesis; 1,4-dihydroxy-2-naphthoate from chorismate: step 2/7. It functions in the pathway quinol/quinone metabolism; menaquinone biosynthesis. Its function is as follows. Catalyzes the thiamine diphosphate-dependent decarboxylation of 2-oxoglutarate and the subsequent addition of the resulting succinic semialdehyde-thiamine pyrophosphate anion to isochorismate to yield 2-succinyl-5-enolpyruvyl-6-hydroxy-3-cyclohexene-1-carboxylate (SEPHCHC). The sequence is that of 2-succinyl-5-enolpyruvyl-6-hydroxy-3-cyclohexene-1-carboxylate synthase from Rhodococcus jostii (strain RHA1).